The primary structure comprises 305 residues: N-acetylmuramic acid 6-phosphate etherase (305 aa).

The SIS domain maps to 54–217 (AVPQLERGGR…SSALMVRLGK (164 aa)). Glu82 functions as the Proton donor in the catalytic mechanism. Glu113 is an active-site residue.

It belongs to the GCKR-like family. MurNAc-6-P etherase subfamily. Homodimer.

It catalyses the reaction N-acetyl-D-muramate 6-phosphate + H2O = N-acetyl-D-glucosamine 6-phosphate + (R)-lactate. Its pathway is amino-sugar metabolism; N-acetylmuramate degradation. In terms of biological role, specifically catalyzes the cleavage of the D-lactyl ether substituent of MurNAc 6-phosphate, producing GlcNAc 6-phosphate and D-lactate. This Deinococcus radiodurans (strain ATCC 13939 / DSM 20539 / JCM 16871 / CCUG 27074 / LMG 4051 / NBRC 15346 / NCIMB 9279 / VKM B-1422 / R1) protein is N-acetylmuramic acid 6-phosphate etherase.